The primary structure comprises 628 residues: Forkhead box protein O (628 aa).

Disordered regions lie at residues 39-77 (RARS…DSQQ), 182-205 (KSVR…RAKK), 217-269 (GLND…RLSP), 316-359 (QQQG…APGY), and 389-415 (NSVT…YSNV). Phosphothreonine; by PKB/AKT1 is present on Thr44. Over residues 63 to 77 (TKASNQQLAPGDSQQ) the composition is skewed to polar residues. Phosphoserine is present on Ser75. The fork-head DNA-binding region spans 95–201 (WGNLSYADLI…ETSRYEKRRG (107 aa)). Ser190 carries the phosphoserine; by PKB/AKT1 modification. 2 stretches are compositionally biased toward polar residues: residues 221–230 (ATPSPSSSVS) and 256–265 (RASSNASSCG). At Ser259 the chain carries Phosphoserine; by PKB/AKT1. A phosphoserine mark is found at Ser262, Ser263, and Ser268. Residues 328-337 (SQPPPPPYQP) show a composition bias toward pro residues. Over residues 338-351 (PQHQQAQQQQSPYA) the composition is skewed to low complexity. The segment covering 402-414 (SEPSSDSLNTYSN) has biased composition (polar residues).

As to quaternary structure, interacts with melt.

The protein localises to the cytoplasm. Its subcellular location is the nucleus. Transcription factor involved in the regulation of the insulin signaling pathway. Consistently activates both the downstream target Thor\d4EBP and the feedback control target InR. Involved in negative regulation of the cell cycle, modulating cell growth and proliferation. In response to cellular stresses, such as nutrient deprivation or increased levels of reactive oxygen species, foxo is activated and inhibits growth through the action of target genes such as Thor. Foxo activated in the adult fat body can regulate lifespan in adults; an insulin peptide itself may function as one secondary messenger of insulin-regulated aging. Also regulates Lip4, homolog of human acid lipases, thereby acting as a key modulator of lipid metabolism by insulin signaling and integrates insulin responses to glucose and lipid homeostasis. This Drosophila yakuba (Fruit fly) protein is Forkhead box protein O.